A 96-amino-acid chain; its full sequence is Small ribosomal subunit protein bS6 (96 aa).

It belongs to the bacterial ribosomal protein bS6 family.

Binds together with bS18 to 16S ribosomal RNA. The sequence is that of Small ribosomal subunit protein bS6 from Synechococcus sp. (strain JA-2-3B'a(2-13)) (Cyanobacteria bacterium Yellowstone B-Prime).